The sequence spans 416 residues: Serine hydroxymethyltransferase (416 aa).

(6S)-5,6,7,8-tetrahydrofolate is bound by residues leucine 118 and 122 to 124 (GHL). At lysine 226 the chain carries N6-(pyridoxal phosphate)lysine. Residues glutamate 242 and 350-352 (SPF) contribute to the (6S)-5,6,7,8-tetrahydrofolate site.

The protein belongs to the SHMT family. Homodimer. It depends on pyridoxal 5'-phosphate as a cofactor.

The protein resides in the cytoplasm. It carries out the reaction (6R)-5,10-methylene-5,6,7,8-tetrahydrofolate + glycine + H2O = (6S)-5,6,7,8-tetrahydrofolate + L-serine. It participates in one-carbon metabolism; tetrahydrofolate interconversion. The protein operates within amino-acid biosynthesis; glycine biosynthesis; glycine from L-serine: step 1/1. Its function is as follows. Catalyzes the reversible interconversion of serine and glycine with tetrahydrofolate (THF) serving as the one-carbon carrier. This reaction serves as the major source of one-carbon groups required for the biosynthesis of purines, thymidylate, methionine, and other important biomolecules. Also exhibits THF-independent aldolase activity toward beta-hydroxyamino acids, producing glycine and aldehydes, via a retro-aldol mechanism. This Helicobacter acinonychis (strain Sheeba) protein is Serine hydroxymethyltransferase.